Consider the following 214-residue polypeptide: UPF0690 protein C1orf52 homolog (214 aa).

Disordered stretches follow at residues 1–66 and 81–214; these read MSDE…SVSK and DSRA…QCLD. Residues 32 to 44 are compositionally biased toward low complexity; sequence PEATASSAPAEPQ. Basic and acidic residues-rich tracts occupy residues 49 to 61 and 81 to 97; these read RAAE…DELF and DSRA…EFKV. A compositionally biased stretch (acidic residues) spans 152–165; that stretch reads EEEEEEQQPDSDDD. Serine 162 is modified (phosphoserine). 2 stretches are compositionally biased toward basic and acidic residues: residues 179–192 and 200–214; these read VETF…KRDI and NFVE…QCLD.

Belongs to the UPF0690 family.

The sequence is that of UPF0690 protein C1orf52 homolog from Danio rerio (Zebrafish).